Reading from the N-terminus, the 165-residue chain is 2-C-methyl-D-erythritol 2,4-cyclodiphosphate synthase (165 aa).

Residues D13 and H15 each coordinate a divalent metal cation. 4-CDP-2-C-methyl-D-erythritol 2-phosphate is bound by residues 13 to 15 and 39 to 40; these read DRH and HS. H47 lines the a divalent metal cation pocket. Residues 61-63 and F141 contribute to the 4-CDP-2-C-methyl-D-erythritol 2-phosphate site; that span reads DIG.

This sequence belongs to the IspF family. As to quaternary structure, homotrimer. Requires a divalent metal cation as cofactor.

It carries out the reaction 4-CDP-2-C-methyl-D-erythritol 2-phosphate = 2-C-methyl-D-erythritol 2,4-cyclic diphosphate + CMP. Its pathway is isoprenoid biosynthesis; isopentenyl diphosphate biosynthesis via DXP pathway; isopentenyl diphosphate from 1-deoxy-D-xylulose 5-phosphate: step 4/6. Involved in the biosynthesis of isopentenyl diphosphate (IPP) and dimethylallyl diphosphate (DMAPP), two major building blocks of isoprenoid compounds. Catalyzes the conversion of 4-diphosphocytidyl-2-C-methyl-D-erythritol 2-phosphate (CDP-ME2P) to 2-C-methyl-D-erythritol 2,4-cyclodiphosphate (ME-CPP) with a corresponding release of cytidine 5-monophosphate (CMP). The chain is 2-C-methyl-D-erythritol 2,4-cyclodiphosphate synthase from Thermotoga neapolitana (strain ATCC 49049 / DSM 4359 / NBRC 107923 / NS-E).